The chain runs to 957 residues: Glycine dehydrogenase (decarboxylating) (957 aa).

The residue at position 708 (Lys708) is an N6-(pyridoxal phosphate)lysine.

Belongs to the GcvP family. As to quaternary structure, the glycine cleavage system is composed of four proteins: P, T, L and H. Requires pyridoxal 5'-phosphate as cofactor.

It catalyses the reaction N(6)-[(R)-lipoyl]-L-lysyl-[glycine-cleavage complex H protein] + glycine + H(+) = N(6)-[(R)-S(8)-aminomethyldihydrolipoyl]-L-lysyl-[glycine-cleavage complex H protein] + CO2. Its function is as follows. The glycine cleavage system catalyzes the degradation of glycine. The P protein binds the alpha-amino group of glycine through its pyridoxal phosphate cofactor; CO(2) is released and the remaining methylamine moiety is then transferred to the lipoamide cofactor of the H protein. This is Glycine dehydrogenase (decarboxylating) from Salmonella newport (strain SL254).